A 449-amino-acid chain; its full sequence is Anthocyanidin 3-O-glucosyltransferase 1 (449 aa).

The active-site Proton acceptor is His-3. His-3 provides a ligand contact to an anthocyanidin. The Charge relay role is filled by Asp-103. UDP-alpha-D-glucose-binding residues include Thr-125, Ala-325, Gln-327, His-342, Trp-345, Asn-346, Ser-347, and Glu-350. Ala-365 provides a ligand contact to an anthocyanidin. Glu-366 and Gln-367 together coordinate UDP-alpha-D-glucose.

It belongs to the UDP-glycosyltransferase family. As to expression, expressed in cotyledons and roots, but not in leaves.

It carries out the reaction an anthocyanidin + UDP-alpha-D-glucose + H(+) = an anthocyanidin 3-O-beta-D-glucoside + UDP. It participates in pigment biosynthesis; anthocyanin biosynthesis. Its function is as follows. In the presence of other necessary color factors, this glycosylation reaction allows the accumulation of anthocyanin pigments. The chain is Anthocyanidin 3-O-glucosyltransferase 1 (GT1) from Manihot esculenta (Cassava).